A 156-amino-acid polypeptide reads, in one-letter code: SsrA-binding protein (156 aa).

The tract at residues 134 to 156 is disordered; that stretch reads RQTLREQQDKRESLRELRERNRR.

It belongs to the SmpB family.

The protein resides in the cytoplasm. Its function is as follows. Required for rescue of stalled ribosomes mediated by trans-translation. Binds to transfer-messenger RNA (tmRNA), required for stable association of tmRNA with ribosomes. tmRNA and SmpB together mimic tRNA shape, replacing the anticodon stem-loop with SmpB. tmRNA is encoded by the ssrA gene; the 2 termini fold to resemble tRNA(Ala) and it encodes a 'tag peptide', a short internal open reading frame. During trans-translation Ala-aminoacylated tmRNA acts like a tRNA, entering the A-site of stalled ribosomes, displacing the stalled mRNA. The ribosome then switches to translate the ORF on the tmRNA; the nascent peptide is terminated with the 'tag peptide' encoded by the tmRNA and targeted for degradation. The ribosome is freed to recommence translation, which seems to be the essential function of trans-translation. This is SsrA-binding protein from Paenarthrobacter aurescens (strain TC1).